The primary structure comprises 348 residues: Protein pelota homolog (348 aa).

This sequence belongs to the eukaryotic release factor 1 family. Pelota subfamily. As to quaternary structure, monomer. A divalent metal cation serves as cofactor.

The protein localises to the cytoplasm. May function in recognizing stalled ribosomes, interact with stem-loop structures in stalled mRNA molecules, and effect endonucleolytic cleavage of the mRNA. May play a role in the release non-functional ribosomes and degradation of damaged mRNAs. Has endoribonuclease activity. The protein is Protein pelota homolog of Methanococcus vannielii (strain ATCC 35089 / DSM 1224 / JCM 13029 / OCM 148 / SB).